The chain runs to 5255 residues: Bacitracin synthase 1 (5255 aa).

A domain 1 (isoleucine-activating) region spans residues 39–612 (LHELFEEQAM…IKELSAFIEA (574 aa)). Positions 519 to 531 (VDRKALPEPDRTA) are enriched in basic and acidic residues. The disordered stretch occupies residues 519 to 542 (VDRKALPEPDRTAGAENEYEAPRN). The 76-residue stretch at 539-614 (APRNETEEKL…ELSAFIEANH (76 aa)) folds into the Carrier 1 domain. Ser-574 carries the post-translational modification O-(pantetheine 4'-phosphoryl)serine. The segment at 621-1037 (TLVTRAADPE…ITWDYVEQIF (417 aa)) is cyclization. The tract at residues 1109-1648 (HHDEVMTYQE…FKNDTIIALD (540 aa)) is domain 2 (cysteine-activating). Carrier domains follow at residues 1580–1655 (LPEN…KNRE), 2616–2691 (APRD…VRRR), 3659–3733 (PPRN…TEET), and 5166–5241 (APRN…LTAE). Residues Ser-1615, Ser-2651, Ser-3694, and Ser-5201 each carry the O-(pantetheine 4'-phosphoryl)serine modification. Positions 2124-2689 (GKAIHQLFEE…IKGLRDISVR (566 aa)) are domain 3 (leucine-activating). Residues 3164 to 3732 (DHPAVAFGDE…KDLSRFITEE (569 aa)) are domain 4 (glutamine-activating). A domain 5 (isoleucine-activating) region spans residues 4668–5249 (LHELFEEQAM…AEAESAVSEE (582 aa)).

The protein belongs to the ATP-dependent AMP-binding enzyme family. In terms of assembly, large multienzyme complex of BA1, BA2 and BA3. Pantetheine 4'-phosphate serves as cofactor.

The enzyme catalyses L-glutamate = D-glutamate. It participates in antibiotic biosynthesis; bacitracin biosynthesis. Functionally, activates five amino acids, incorporates two D-amino acids, releases and cyclizes the mature bacitracin. This is Bacitracin synthase 1 (bacA) from Bacillus licheniformis.